The following is a 229-amino-acid chain: Transcriptional activator protein IrlR (229 aa).

A Response regulatory domain is found at 2–115 (RILIVEDEPK…ELVARVRSIL (114 aa)). Asp51 is subject to 4-aspartylphosphate. Residues 123–221 (STVLRIADLE…VRGMGYVLEV (99 aa)) constitute a DNA-binding region (ompR/PhoB-type).

In terms of processing, phosphorylated by IrlS.

Member of the two-component regulatory system IrlR/IrlS. May be involved in invasion of eukaryotic cells and heavy-metal resistance. This is Transcriptional activator protein IrlR (irlR) from Burkholderia pseudomallei (strain 1026b).